We begin with the raw amino-acid sequence, 205 residues long: uncharacterized protein (205 aa).

Residues 1–63 (MQRTRELESS…QHPKVAKFLK (63 aa)) are Cytoplasmic-facing. Residues 64-84 (VQLVFDLISLFIFATHQLLLL) traverse the membrane as a helical segment. Residues 85-124 (EDGNFGKHYFKRKTKRCSKFSCSRCNANAHHPKWFKFKHS) are Extracellular-facing. The chain crosses the membrane as a helical span at residues 125 to 145 (LLCLGTFCFGVYSLVKINKFF). Over 146–205 (KTDQTVDLNRLLELFFWQLNAILNMKLFAFYGDHLESHSAPLDVYEDSFANKSSSGGDEV) the chain is Cytoplasmic.

The protein resides in the membrane. This is an uncharacterized protein from Saccharomyces cerevisiae (strain ATCC 204508 / S288c) (Baker's yeast).